We begin with the raw amino-acid sequence, 188 residues long: Ribosome maturation factor RimM (188 aa).

The PRC barrel domain maps to 96–169 (DDEFYYADLE…RILIDPMAAG (74 aa)).

Belongs to the RimM family. Binds ribosomal protein uS19.

It is found in the cytoplasm. Its function is as follows. An accessory protein needed during the final step in the assembly of 30S ribosomal subunit, possibly for assembly of the head region. Essential for efficient processing of 16S rRNA. May be needed both before and after RbfA during the maturation of 16S rRNA. It has affinity for free ribosomal 30S subunits but not for 70S ribosomes. The sequence is that of Ribosome maturation factor RimM from Agrobacterium fabrum (strain C58 / ATCC 33970) (Agrobacterium tumefaciens (strain C58)).